Consider the following 631-residue polypeptide: tRNA uridine 5-carboxymethylaminomethyl modification enzyme MnmG (631 aa).

Residues 13–18, Val125, and Ser180 contribute to the FAD site; that span reads GGGHAG. 273–287 serves as a coordination point for NAD(+); sequence GPRYCPSIEDKVNRY. Residue Gln370 coordinates FAD.

The protein belongs to the MnmG family. As to quaternary structure, homodimer. Heterotetramer of two MnmE and two MnmG subunits. It depends on FAD as a cofactor.

It is found in the cytoplasm. NAD-binding protein involved in the addition of a carboxymethylaminomethyl (cmnm) group at the wobble position (U34) of certain tRNAs, forming tRNA-cmnm(5)s(2)U34. The chain is tRNA uridine 5-carboxymethylaminomethyl modification enzyme MnmG from Alcanivorax borkumensis (strain ATCC 700651 / DSM 11573 / NCIMB 13689 / SK2).